We begin with the raw amino-acid sequence, 489 residues long: MSLTNADETVTYDALIVGAGVIGPCVATALARKGKKVLIVEREWSQPDRIVGELMQPGGLRALRSLGMIQSINNIDAYPVTGYTVFYNGEHVDIPYPYKADLKPVEKLPGLVRDGNDKVLEDATVHKKDFEDDERERGVGLVHGRFLNNLRNICAAEPNVTRLQGNVVEILKDKKNEVVGAKVDVDSRGKVDFKAHLTFVCDGIFSRFRRELHPDHVPTVNSSFVGMSLYHAHMPHDMHGHVILGDKHMPILVYQISPEETRILCAYNAPKVPTDLKSWMTKDVQPYIPKTLRPSFDDALAQGKFKPMANSWLPARQNDVTGLCVIGDALNMRHPLTGGGMTVGLNDVVLLIKKIGDLDFSDREKVLDELLDYHFERKNYDAVVNVLSISLYSLFAADSKNLKALQKGCFKYFQRGGDCVNLPVAFLAGVLPKPLLLTRVFFAVAFYTIYLNMEERGFLGLPMALLEGIMILITAIKVFTPFLVRELIG.

The helical transmembrane segment at 10-30 (VTYDALIVGAGVIGPCVATAL) threads the bilayer. Residues 21–22 (VI), 41–42 (ER), Arg-49, Arg-151, Val-167, Asp-328, and Met-341 each bind FAD. The next 2 helical transmembrane spans lie at 426–446 (FLAGVLPKPLLLTRVFFAVAF) and 464–484 (ALLEGIMILITAIKVFTPFLV).

Belongs to the squalene monooxygenase family. It depends on FAD as a cofactor.

The protein resides in the microsome membrane. It is found in the endoplasmic reticulum membrane. It catalyses the reaction squalene + reduced [NADPH--hemoprotein reductase] + O2 = (S)-2,3-epoxysqualene + oxidized [NADPH--hemoprotein reductase] + H2O + H(+). Its pathway is terpene metabolism; lanosterol biosynthesis; lanosterol from farnesyl diphosphate: step 2/3. Its function is as follows. Catalyzes the stereospecific oxidation of squalene to (S)-2,3-epoxysqualene, and is considered to be a rate-limiting enzyme in steroid biosynthesis. This Candida glabrata (strain ATCC 2001 / BCRC 20586 / JCM 3761 / NBRC 0622 / NRRL Y-65 / CBS 138) (Yeast) protein is Squalene monooxygenase (ERG1).